We begin with the raw amino-acid sequence, 529 residues long: Beta-hexosaminidase subunit alpha (529 aa).

Residues Met1–Ala22 form the signal peptide. Residues Leu23–His88 constitute a propeptide that is removed on maturation. Cysteines 58 and 104 form a disulfide. 3 N-linked (GlcNAc...) asparagine glycosylation sites follow: Asn115, Asn157, and Asn295. An intrachain disulfide couples Cys277 to Cys328. Glu323 functions as the Proton donor in the catalytic mechanism. Positions Asn423–His424 are critical for hydrolysis GM2 gangliosides. Cys505 and Cys522 are oxidised to a cystine.

Belongs to the glycosyl hydrolase 20 family. As to quaternary structure, there are 3 beta-hexosaminidase isozymes: isozyme A (hexosaminidase A) is a heterodimer composed of one subunit alpha and one subunit beta (chain A and B); isozyme B (hexosaminidase B) is a homodimer of two beta subunits (two chains A and B); isozyme S (hexosaminidase S) is a homodimer of two alpha subunits. The composition of the dimer (isozyme A versus isozyme S) has a significant effect on the substrate specificity of the alpha subunit active site.

The protein resides in the lysosome. It catalyses the reaction Hydrolysis of terminal non-reducing N-acetyl-D-hexosamine residues in N-acetyl-beta-D-hexosaminides.. The enzyme catalyses N-acetyl-beta-D-galactosaminyl-(1-&gt;4)-beta-D-3-sulfogalactosyl-(1-&gt;4)-beta-D-glucosyl-(1&lt;-&gt;1')-ceramide + H2O = a beta-D-3-sulfogalactosyl-(1-&gt;4)-beta-D-glucosyl-(1&lt;-&gt;1')-ceramide + N-acetyl-beta-D-galactosamine. The catalysed reaction is a ganglioside GM2 (d18:1(4E)) + H2O = a ganglioside GM3 (d18:1(4E)) + N-acetyl-beta-D-galactosamine. It carries out the reaction a ganglioside GM2 + H2O = a ganglioside GM3 + N-acetyl-beta-D-galactosamine. It catalyses the reaction beta-D-GalNAc-(1-&gt;4)-alpha-L-IdoA-(1-&gt;3)-beta-D-GalNAc-4-sulfate-(1-&gt;4)-alpha-L-IdoA-(1-&gt;3)-D-GalNAc-4-sulfate + H2O = alpha-L-IdoA-(1-&gt;3)-beta-D-GalNAc-4-sulfate-(1-&gt;4)-alpha-L-IdoA-(1-&gt;3)-D-GalNAc-4-sulfate + N-acetyl-D-galactosamine. The enzyme catalyses N-acetyl-beta-D-6-sulfogalactosaminyl-(1-&gt;4)-alpha-L-iduronyl-(1-&gt;3)-N-acetyl-D-6-sulfogalactosamine + H2O = alpha-L-iduronyl-(1-&gt;3)-N-acetyl-D-6-sulfogalactosamine + N-acetyl-D-6-sulfogalactosamine. Addition of GM2A stimulates the hydrolysis of sulfated glycosphingolipid SM2 and the ganglioside GM2. Its function is as follows. Hydrolyzes the non-reducing end N-acetyl-D-hexosamine and/or sulfated N-acetyl-D-hexosamine of glycoconjugates, such as the oligosaccharide moieties from proteins and neutral glycolipids, or from certain mucopolysaccharides. The isozyme S is as active as the isozyme A on the anionic bis-sulfated glycans, the chondroitin-6-sulfate trisaccharide (C6S-3), and the dermatan sulfate pentasaccharide, and the sulfated glycosphingolipid SM2. The isozyme B does not hydrolyze each of these substrates, however hydrolyzes efficiently neutral oligosaccharide. Only the isozyme A is responsible for the degradation of GM2 gangliosides in the presence of GM2A. The polypeptide is Beta-hexosaminidase subunit alpha (Bos taurus (Bovine)).